The primary structure comprises 262 residues: Carbonic anhydrase 1 (262 aa).

Position 2 is an N-acetylalanine (alanine 2). Residues 4–261 (LNWSYEGENG…LKGRQVKASF (258 aa)) form the Alpha-carbonic anhydrase domain. Catalysis depends on histidine 65, which acts as the Proton donor/acceptor. The Zn(2+) site is built by histidine 95, histidine 97, and histidine 120. Substrate contacts are provided by residues threonine 200 and 200–201 (TH).

This sequence belongs to the alpha-carbonic anhydrase family. The cofactor is Zn(2+).

It is found in the cytoplasm. The catalysed reaction is hydrogencarbonate + H(+) = CO2 + H2O. It catalyses the reaction urea = cyanamide + H2O. With respect to regulation, inhibited by acetazolamide. Functionally, catalyzes the reversible hydration of carbon dioxide. Can hydrate cyanamide to urea. This Monodelphis domestica (Gray short-tailed opossum) protein is Carbonic anhydrase 1 (CA1).